Reading from the N-terminus, the 304-residue chain is Mitochondrial glycine transporter (304 aa).

Solcar repeat units lie at residues 3 to 82, 106 to 186, and 209 to 293; these read GKSK…VREA, ENLI…LKVA, and SSAM…LVKR. 6 helical membrane-spanning segments follow: residues 9–34, 57–83, 108–133, 161–184, 213–239, and 268–286; these read IYAGFTSGLVSAVVLQPFDLLKTRVQ, GTLPSALRMSVGSAMYFTCLNTVREAV, LISGGLVRGTVGLLVMPITVIKVRYE, GWAATFARDAPYAGLYMLFYEQLK, INSVAAATSAGIATTCTNPFDTVKTRM, and GLALRICRKACQAGISWCI.

This sequence belongs to the mitochondrial carrier (TC 2.A.29) family. SLC25A38 subfamily.

The protein resides in the mitochondrion inner membrane. The catalysed reaction is glycine(in) = glycine(out). Its function is as follows. Mitochondrial glycine transporter that imports glycine into the mitochondrial matrix. Plays an important role in providing glycine for the first enzymatic step in heme biosynthesis, the condensation of glycine with succinyl-CoA to produce 5-aminolevulinate (ALA) in the mitochondrial matrix. The polypeptide is Mitochondrial glycine transporter (Yarrowia lipolytica (strain CLIB 122 / E 150) (Yeast)).